Reading from the N-terminus, the 399-residue chain is Succinate--CoA ligase [ADP-forming] subunit beta (399 aa).

In terms of domain architecture, ATP-grasp spans 9-254 (KQVLAKYGVP…EDEEDPMELE (246 aa)). ATP is bound by residues Lys-46, 53–55 (GRG), Glu-109, Cys-112, and Glu-117. Asn-209 and Asp-223 together coordinate Mg(2+). Substrate contacts are provided by residues Asn-274 and 331–333 (GIM).

Belongs to the succinate/malate CoA ligase beta subunit family. In terms of assembly, heterotetramer of two alpha and two beta subunits. It depends on Mg(2+) as a cofactor.

It catalyses the reaction succinate + ATP + CoA = succinyl-CoA + ADP + phosphate. The enzyme catalyses GTP + succinate + CoA = succinyl-CoA + GDP + phosphate. It participates in carbohydrate metabolism; tricarboxylic acid cycle; succinate from succinyl-CoA (ligase route): step 1/1. In terms of biological role, succinyl-CoA synthetase functions in the citric acid cycle (TCA), coupling the hydrolysis of succinyl-CoA to the synthesis of either ATP or GTP and thus represents the only step of substrate-level phosphorylation in the TCA. The beta subunit provides nucleotide specificity of the enzyme and binds the substrate succinate, while the binding sites for coenzyme A and phosphate are found in the alpha subunit. This Rhodospirillum rubrum (strain ATCC 11170 / ATH 1.1.1 / DSM 467 / LMG 4362 / NCIMB 8255 / S1) protein is Succinate--CoA ligase [ADP-forming] subunit beta.